The sequence spans 618 residues: Sphingomyelin phosphodiesterase 2 (618 aa).

A signal peptide spans 1 to 22 (MQQPLIILGIGIVLALVSNVES). One can recognise a Saposin B-type domain in the interval 68–151 (RKMSCLFCTF…AFIANCGHSD (84 aa)). Cystine bridges form between cysteine 72/cysteine 147, cysteine 75/cysteine 140, and cysteine 103/cysteine 114. N-linked (GlcNAc...) asparagine glycosylation is present at asparagine 89. Asparagine 159 carries N-linked (GlcNAc...) asparagine glycosylation. Positions 189 and 191 each coordinate Zn(2+). Intrachain disulfides connect cysteine 204–cysteine 216 and cysteine 217–cysteine 249. A Zn(2+)-binding site is contributed by aspartate 278. Asparagine 298 is a glycosylation site (N-linked (GlcNAc...) asparagine). Residues asparagine 318, histidine 427, histidine 461, and histidine 463 each contribute to the Zn(2+) site. Cysteines 387 and 435 form a disulfide. 2 N-linked (GlcNAc...) asparagine glycosylation sites follow: asparagine 525 and asparagine 568. 2 cysteine pairs are disulfide-bonded: cysteine 588–cysteine 594 and cysteine 600–cysteine 613.

The protein belongs to the acid sphingomyelinase family. Zn(2+) serves as cofactor.

It is found in the secreted. The catalysed reaction is a sphingomyelin + H2O = phosphocholine + an N-acylsphing-4-enine + H(+). It carries out the reaction an N-acyl-15-methylhexadecasphing-4-enine-1-phosphocholine + H2O = an N-acyl-15-methylhexadecasphing-4-enine + phosphocholine + H(+). The protein operates within lipid metabolism; sphingolipid metabolism. Sphingomyelin phosphodiesterase (sphingomyelinase) that converts sphingomyelin (N-acyl-sphingoid-1-phosphocholine) to ceramide (N-acyl-sphingoid base) and phosphocholine at acidic pH. Displays its enzymatic activity when secreted. May play distinct roles in signaling. The polypeptide is Sphingomyelin phosphodiesterase 2 (asm-2) (Caenorhabditis elegans).